The following is a 692-amino-acid chain: Phenoloxidase subunit 2 (692 aa).

Residues M1 to V97 constitute a propeptide that is removed on maturation. Cu cation-binding residues include H213, H217, and H243. N256, N295, and N309 each carry an N-linked (GlcNAc...) asparagine glycan. The active-site Proton acceptor is E351. Positions 366, 370, and 406 each coordinate Cu cation. Residue N494 is glycosylated (N-linked (GlcNAc...) asparagine). Intrachain disulfides connect C583–C628 and C585–C635.

It belongs to the tyrosinase family. Heterodimer. Cu(2+) serves as cofactor.

It localises to the secreted. The catalysed reaction is L-tyrosine + O2 = L-dopaquinone + H2O. It carries out the reaction 2 L-dopa + O2 = 2 L-dopaquinone + 2 H2O. Functionally, copper-containing oxidase that functions in the formation of pigments such as melanins and other polyphenolic compounds. Catalyzes the rate-limiting conversions of tyrosine to DOPA, DOPA to DOPA-quinone and possibly 5,6 dihydroxyindole to indole-5'6 quinone. Binds to the surface of hemocytes and is involved in hemocyte melanization. Binds the A.niger cell wall component alpha-1,3-glucan, a fungal pathogen-associated molecular pattern (PAMP) that activates the host immune response. The protein is Phenoloxidase subunit 2 of Galleria mellonella (Greater wax moth).